We begin with the raw amino-acid sequence, 407 residues long: Probable tRNA sulfurtransferase (407 aa).

One can recognise a THUMP domain in the interval 61–165 (NEITYRLSKI…LDAIYMYEEV (105 aa)). Residues 183–184 (ML), 208–209 (HF), R265, G287, and Q296 contribute to the ATP site.

It belongs to the ThiI family.

It is found in the cytoplasm. The catalysed reaction is [ThiI sulfur-carrier protein]-S-sulfanyl-L-cysteine + a uridine in tRNA + 2 reduced [2Fe-2S]-[ferredoxin] + ATP + H(+) = [ThiI sulfur-carrier protein]-L-cysteine + a 4-thiouridine in tRNA + 2 oxidized [2Fe-2S]-[ferredoxin] + AMP + diphosphate. It catalyses the reaction [ThiS sulfur-carrier protein]-C-terminal Gly-Gly-AMP + S-sulfanyl-L-cysteinyl-[cysteine desulfurase] + AH2 = [ThiS sulfur-carrier protein]-C-terminal-Gly-aminoethanethioate + L-cysteinyl-[cysteine desulfurase] + A + AMP + 2 H(+). It functions in the pathway cofactor biosynthesis; thiamine diphosphate biosynthesis. Catalyzes the ATP-dependent transfer of a sulfur to tRNA to produce 4-thiouridine in position 8 of tRNAs, which functions as a near-UV photosensor. Also catalyzes the transfer of sulfur to the sulfur carrier protein ThiS, forming ThiS-thiocarboxylate. This is a step in the synthesis of thiazole, in the thiamine biosynthesis pathway. The sulfur is donated as persulfide by IscS. The protein is Probable tRNA sulfurtransferase of Staphylococcus aureus (strain JH1).